Reading from the N-terminus, the 212-residue chain is Ribosomal RNA large subunit methyltransferase E (212 aa).

Residues 1 to 10 (MATCRRRRRG) show a composition bias toward basic residues. The tract at residues 1 to 24 (MATCRRRRRGCNSQARRSRHESDP) is disordered. 5 residues coordinate S-adenosyl-L-methionine: glycine 66, tryptophan 68, aspartate 86, aspartate 102, and aspartate 127. Lysine 167 functions as the Proton acceptor in the catalytic mechanism.

Belongs to the class I-like SAM-binding methyltransferase superfamily. RNA methyltransferase RlmE family.

It is found in the cytoplasm. It catalyses the reaction uridine(2552) in 23S rRNA + S-adenosyl-L-methionine = 2'-O-methyluridine(2552) in 23S rRNA + S-adenosyl-L-homocysteine + H(+). In terms of biological role, specifically methylates the uridine in position 2552 of 23S rRNA at the 2'-O position of the ribose in the fully assembled 50S ribosomal subunit. In Halorhodospira halophila (strain DSM 244 / SL1) (Ectothiorhodospira halophila (strain DSM 244 / SL1)), this protein is Ribosomal RNA large subunit methyltransferase E.